We begin with the raw amino-acid sequence, 283 residues long: Nucleoid occlusion protein (283 aa).

Residues Met1–Glu26 are disordered. Residues Asp13–Glu26 are compositionally biased toward basic and acidic residues. The segment at residues Glu143–Leu162 is a DNA-binding region (H-T-H motif).

This sequence belongs to the ParB family.

It localises to the cytoplasm. The protein localises to the nucleoid. Functionally, effects nucleoid occlusion by binding relatively nonspecifically to DNA and preventing the assembly of the division machinery in the vicinity of the nucleoid, especially under conditions that disturb the cell cycle. It helps to coordinate cell division and chromosome segregation by preventing the formation of the Z ring through the nucleoid, which would cause chromosome breakage. The sequence is that of Nucleoid occlusion protein from Halalkalibacterium halodurans (strain ATCC BAA-125 / DSM 18197 / FERM 7344 / JCM 9153 / C-125) (Bacillus halodurans).